We begin with the raw amino-acid sequence, 215 residues long: Cytochrome b6 (215 aa).

A helical transmembrane segment spans residues 32-52; sequence IFHCLGGITLTCFLVQVATGF. Cysteine 35 is a heme c binding site. Residues histidine 86 and histidine 100 each coordinate heme b. 3 consecutive transmembrane segments (helical) span residues 90–110, 116–136, and 186–206; these read ASMM…TGGF, LTWV…VTGY, and LHTF…FSMI. Positions 187 and 202 each coordinate heme b.

This sequence belongs to the cytochrome b family. PetB subfamily. As to quaternary structure, the 4 large subunits of the cytochrome b6-f complex are cytochrome b6, subunit IV (17 kDa polypeptide, PetD), cytochrome f and the Rieske protein, while the 4 small subunits are PetG, PetL, PetM and PetN. The complex functions as a dimer. The cofactor is heme b. Heme c is required as a cofactor.

It localises to the plastid. The protein resides in the chloroplast thylakoid membrane. Functionally, component of the cytochrome b6-f complex, which mediates electron transfer between photosystem II (PSII) and photosystem I (PSI), cyclic electron flow around PSI, and state transitions. The polypeptide is Cytochrome b6 (Nymphaea alba (White water-lily)).